A 287-amino-acid polypeptide reads, in one-letter code: Elongation factor Ts (287 aa).

An involved in Mg(2+) ion dislocation from EF-Tu region spans residues 79-82; the sequence is TDFV.

This sequence belongs to the EF-Ts family.

It is found in the cytoplasm. Associates with the EF-Tu.GDP complex and induces the exchange of GDP to GTP. It remains bound to the aminoacyl-tRNA.EF-Tu.GTP complex up to the GTP hydrolysis stage on the ribosome. This chain is Elongation factor Ts, found in Anaplasma phagocytophilum (strain HZ).